The sequence spans 97 residues: Small ribosomal subunit protein bS6 (97 aa).

This sequence belongs to the bacterial ribosomal protein bS6 family.

Binds together with bS18 to 16S ribosomal RNA. The polypeptide is Small ribosomal subunit protein bS6 (Listeria monocytogenes serotype 4b (strain CLIP80459)).